We begin with the raw amino-acid sequence, 479 residues long: MNRNPDHNTFPNITLKIIETYLGRLPSVNEYHMLKLQTRNIQKITVFNKDIFVSLVKKNKKRFFSDVDTSASEIKDRILSYFSKQTQTYNIGKLFTIIELQSVLVTTYTNILGVLTIKAPNVISSKISYNVTSMEELARDMLNSMNVAVIDKAKVMGRHNVSSLVKNVNKLMEEYLRRHNKSCICYGSYSLYLINPNIRYGDIDILQTNSRTFLIDLAFLIKFITGNNIILSKIPYLRNYMVIKDENDNHIIDSFNIRQDTMNVVPKIFIDNIYIVDPTFQLLNMIKMFSQIDRLEDLSKDPEKFNARMATMLEYVRYTHGIVFDGKRNNMPMKCIIDENNRVVTVTTKDYFSFKKCLVYLDENVLSSDILDLNADTSCDFESVTNSVYLIHDNIMYTYFSNTILLSDKGKVHEISARGLCAHILLYQMLTSGAYKQCLSDLLNSMMNRDKIPIYSHTERDKKHGRHGFINIEKDIIVF.

Active-site residues include aspartate 202 and aspartate 204. Residues aspartate 202, aspartate 204, and aspartate 253 each contribute to the Ca(2+) site.

Belongs to the poxviridae poly(A) polymerase catalytic subunit family. In terms of assembly, heterodimer of a large (catalytic) subunit and a small (regulatory) subunit.

The enzyme catalyses RNA(n) + ATP = RNA(n)-3'-adenine ribonucleotide + diphosphate. Functionally, polymerase that creates the 3'-poly(A) tail of mRNA's. This chain is Poly(A) polymerase catalytic subunit (OPG063), found in Homo sapiens (Human).